The sequence spans 264 residues: NAD kinase 1 (264 aa).

The active-site Proton acceptor is Asp-45. Residues 45 to 46 (DG), 122 to 123 (NE), Arg-148, Asp-150, 161 to 166 (TAYNKS), and Ala-185 each bind NAD(+).

It belongs to the NAD kinase family. Requires a divalent metal cation as cofactor.

The protein resides in the cytoplasm. The enzyme catalyses NAD(+) + ATP = ADP + NADP(+) + H(+). Involved in the regulation of the intracellular balance of NAD and NADP, and is a key enzyme in the biosynthesis of NADP. Catalyzes specifically the phosphorylation on 2'-hydroxyl of the adenosine moiety of NAD to yield NADP. The protein is NAD kinase 1 of Listeria monocytogenes serotype 4b (strain F2365).